The chain runs to 126 residues: Histone H2B 3 (126 aa).

The segment covering 1–12 (MPEPAKSAPAPK) has biased composition (low complexity). Residues 1–34 (MPEPAKSAPAPKKGSKKAVTKTQKKGDKKRRKTR) are disordered. N6-acetyllysine is present on residues K6 and K13. Residues 13–34 (KGSKKAVTKTQKKGDKKRRKTR) are compositionally biased toward basic residues. Position 15 is a phosphoserine (S15). An N6-acetyllysine mark is found at K16 and K21. Residue S113 is glycosylated (O-linked (GlcNAc) serine). K121 participates in a covalent cross-link: Glycyl lysine isopeptide (Lys-Gly) (interchain with G-Cter in ubiquitin).

It belongs to the histone H2B family. As to quaternary structure, the nucleosome is a histone octamer containing two molecules each of H2A, H2B, H3 and H4 assembled in one H3-H4 heterotetramer and two H2A-H2B heterodimers. The octamer wraps approximately 147 bp of DNA. Monoubiquitination of Lys-121 by the BRE1 gives a specific tag for epigenetic transcriptional activation and is also prerequisite for histone H3 'Lys-4' and 'Lys-79' methylation. In terms of processing, phosphorylated on Ser-15 during apoptosis; which facilitates apoptotic chromatin condensation. Post-translationally, glcNAcylation at Ser-113 promotes monoubiquitination of Lys-121. It fluctuates in response to extracellular glucose, and associates with transcribed genes.

The protein localises to the nucleus. It is found in the chromosome. Core component of nucleosome. Nucleosomes wrap and compact DNA into chromatin, limiting DNA accessibility to the cellular machineries which require DNA as a template. Histones thereby play a central role in transcription regulation, DNA repair, DNA replication and chromosomal stability. DNA accessibility is regulated via a complex set of post-translational modifications of histones, also called histone code, and nucleosome remodeling. The chain is Histone H2B 3 (hist2h2l) from Danio rerio (Zebrafish).